A 260-amino-acid polypeptide reads, in one-letter code: 3-methyl-2-oxobutanoate hydroxymethyltransferase (260 aa).

Residues aspartate 42 and aspartate 81 each contribute to the Mg(2+) site. Residues aspartate 42–serine 43, aspartate 81, and lysine 109 contribute to the 3-methyl-2-oxobutanoate site. Residue glutamate 111 participates in Mg(2+) binding. Glutamate 178 acts as the Proton acceptor in catalysis.

Belongs to the PanB family. Homodecamer; pentamer of dimers. Requires Mg(2+) as cofactor.

It localises to the cytoplasm. The enzyme catalyses 3-methyl-2-oxobutanoate + (6R)-5,10-methylene-5,6,7,8-tetrahydrofolate + H2O = 2-dehydropantoate + (6S)-5,6,7,8-tetrahydrofolate. It functions in the pathway cofactor biosynthesis; (R)-pantothenate biosynthesis; (R)-pantoate from 3-methyl-2-oxobutanoate: step 1/2. Catalyzes the reversible reaction in which hydroxymethyl group from 5,10-methylenetetrahydrofolate is transferred onto alpha-ketoisovalerate to form ketopantoate. This is 3-methyl-2-oxobutanoate hydroxymethyltransferase from Ruthia magnifica subsp. Calyptogena magnifica.